The primary structure comprises 325 residues: Ribosomal RNA small subunit methyltransferase C (325 aa).

This sequence belongs to the methyltransferase superfamily. RsmC family. As to quaternary structure, monomer.

It is found in the cytoplasm. The catalysed reaction is guanosine(1207) in 16S rRNA + S-adenosyl-L-methionine = N(2)-methylguanosine(1207) in 16S rRNA + S-adenosyl-L-homocysteine + H(+). Functionally, specifically methylates the guanine in position 1207 of 16S rRNA in the 30S particle. The protein is Ribosomal RNA small subunit methyltransferase C of Alcanivorax borkumensis (strain ATCC 700651 / DSM 11573 / NCIMB 13689 / SK2).